A 1483-amino-acid chain; its full sequence is Rho GTPase-activating protein 23 (1483 aa).

The interval 15-34 (PEPRPPQLPLGPRDGCSSGR) is disordered. The PDZ domain occupies 71-155 (HCILKEEENG…TLELSIMPKD (85 aa)). Disordered stretches follow at residues 212–276 (ISAL…PGSR) and 300–345 (AGER…GQEG). Residues 316-325 (SQDRLEDVTT) are compositionally biased toward basic and acidic residues. Polar residues predominate over residues 331–342 (CSTSQDALSQLG). 2 positions are modified to phosphoserine: Ser361 and Ser372. A disordered region spans residues 385-407 (PSARTSACPSRDLTQAPPPSGLQ). Ser421 carries the phosphoserine modification. 2 disordered regions span residues 448 to 485 (SLAQ…DHRD) and 508 to 527 (NLGF…RLGR). Residues Ser515, Ser579, Ser607, and Ser619 each carry the phosphoserine modification. A Phosphothreonine modification is found at Thr652. Phosphoserine is present on residues Ser655, Ser658, and Ser673. Positions 684–804 (DIRREGWLYY…WIRAIRENSR (121 aa)) constitute a PH domain. The tract at residues 827 to 848 (KVSHSSGPKADSSPKGSRGLGG) is disordered. Residue Lys850 forms a Glycyl lysine isopeptide (Lys-Gly) (interchain with G-Cter in SUMO2) linkage. Disordered stretches follow at residues 860–879 (RGLR…VAAP), 1093–1150 (FSDD…SWVP), 1171–1361 (KRKK…GSRP), and 1419–1469 (ELGG…LQGL). One can recognise a Rho-GAP domain in the interval 901-1093 (IRLEECQPAT…TLIQHSDWFF (193 aa)). Over residues 1099–1110 (KGERTPVDDKEP) the composition is skewed to basic and acidic residues. Composition is skewed to polar residues over residues 1133 to 1144 (GSDSTTCSSAKS) and 1236 to 1248 (SIVS…STMD). Low complexity predominate over residues 1338-1351 (GSASSSSQESLRPP). Residues 1440–1457 (SGLSSLESTKARASSAAS) are compositionally biased toward polar residues.

In terms of biological role, GTPase activator for the Rho-type GTPases by converting them to an inactive GDP-bound state. This chain is Rho GTPase-activating protein 23 (Arhgap23), found in Mus musculus (Mouse).